Reading from the N-terminus, the 1212-residue chain is uncharacterized protein (1212 aa).

The segment covering Met1–Tyr31 has biased composition (polar residues). 7 disordered regions span residues Met1–Gln70, Pro119–Asn169, Ser211–Asn231, Ile248–Lys374, Gln655–Gln681, Asn935–Ala957, and Gln973–Gln1125. Low complexity-rich tracts occupy residues Pro48–Gln70 and Pro119–Asn163. Residues Asn256–Asn275 show a composition bias toward low complexity. Polar residues-rich tracts occupy residues Lys276 to Ser285 and Tyr292 to Pro317. Low complexity predominate over residues Ile322–Gln340. Residues Thr341–His351 are compositionally biased toward polar residues. The segment covering Asn352–Asn373 has biased composition (low complexity). Composition is skewed to low complexity over residues Asn998–Asn1022 and Gln1037–Gln1125.

This is an uncharacterized protein from Dictyostelium discoideum (Social amoeba).